Consider the following 344-residue polypeptide: MESSSVDESTTSTGSICETPAITPAKKSSVGNLYRMGSGSSVVLDSENGVEAESRKLPSSKYKGVVPQPNGRWGAQIYEKHQRVWLGTFNEEDEAARAYDVAVHRFRRRDAVTNFKDVKMDEDEVDFLNSHSKSEIVDMLRKHTYNEELEQSKRRRNGNGNMTRTLLTSGLSNDGVSTTGFRSAEALFEKAVTPSDVGKLNRLVIPKHHAEKHFPLPSSNVSVKGVLLNFEDVNGKVWRFRYSYWNSSQSYVLTKGWSRFVKEKNLRAGDVVSFSRSNGQDQQLYIGWKSRSGSDLDAGRVLRLFGVNISPESSRNDVVGNKRVNDTEMLSLVCSKKQRIFHAS.

Positions 1 to 15 (MESSSVDESTTSTGS) are enriched in low complexity. The disordered stretch occupies residues 1–22 (MESSSVDESTTSTGSICETPAI). A DNA-binding region (AP2/ERF) is located at residues 61–116 (KYKGVVPQPNGRWGAQIYEKHQRVWLGTFNEEDEAARAYDVAVHRFRRRDAVTNFK). The interval 148–169 (ELEQSKRRRNGNGNMTRTLLTS) is disordered. The segment at residues 188–292 (FEKAVTPSDV…QLYIGWKSRS (105 aa)) is a DNA-binding region (TF-B3).

Belongs to the AP2/ERF transcription factor family. RAV subfamily. As to quaternary structure, monomer. As to expression, expressed in all tissues examined: Roots, rosette leaves, cauline leaves, inflorescence stems, flowers and siliques. Highest expression in roots and rosette leaves. Very low expression in flowers.

It is found in the nucleus. Functionally, binds specifically to bipartite recognition sequences composed of two unrelated motifs, 5'-CAACA-3' and 5'-CACCTG-3'. May function as negative regulator of plant growth and development. This Arabidopsis thaliana (Mouse-ear cress) protein is AP2/ERF and B3 domain-containing transcription factor RAV1 (RAV1).